A 677-amino-acid polypeptide reads, in one-letter code: Zinc finger protein 526 (677 aa).

3 consecutive C2H2-type zinc fingers follow at residues 57–79 (FMCS…QEQH), 109–131 (FQCG…QDAH), and 141–164 (YQCG…KAQH). Residues 167-190 (TAAAKPPVPPPLPPVTPPPPPPAP) are disordered. Residues 172–190 (PPVPPPLPPVTPPPPPPAP) show a composition bias toward pro residues. A C2H2-type 4 zinc finger spans residues 198–220 (YECPECSTLCTTPEEFLEHQGTH). Positions 223 to 232 (SLEKEEHNGL) are enriched in basic and acidic residues. The tract at residues 223–300 (SLEKEEHNGL…RRASHGPASA (78 aa)) is disordered. The segment covering 233 to 257 (EEEEEDDEDDNEETEEEEEAAAEVG) has biased composition (acidic residues). 4 C2H2-type zinc fingers span residues 304-326 (FYCS…GRAH), 331-353 (HECT…LRLH), 359-381 (YLCV…RRAH), and 387-408 (HRCR…RRTH). Residues 408–449 (HAGKSGAPPSAAPPTVASAVASLAPAEPTPPPPAPPTPPAQL) form a disordered region. Residues 410-433 (GKSGAPPSAAPPTVASAVASLAPA) are compositionally biased toward low complexity. Pro residues predominate over residues 434–449 (EPTPPPPAPPTPPAQL). 5 consecutive C2H2-type zinc fingers follow at residues 449–472 (LPCP…RAVH), 479–501 (HRCG…LRTH), 507–529 (FQCH…QLTH), 535–557 (YQCL…RRLH), and 580–602 (YYCG…QRVH). The tract at residues 608 to 627 (LTLQPPRSPPPAPPPPPEPQ) is disordered. Positions 613–626 (PRSPPPAPPPPPEP) are enriched in pro residues.

The protein belongs to the krueppel C2H2-type zinc-finger protein family.

Its subcellular location is the nucleus. In terms of biological role, may be involved in transcriptional regulation. This is Zinc finger protein 526 (ZNF526) from Bos taurus (Bovine).